The primary structure comprises 110 residues: UPF0060 membrane protein Pnap_4944 (110 aa).

4 helical membrane passes run 8–28, 33–53, 65–85, and 88–108; these read ILFA…WLVL, SLLL…LLTL, YGGM…GIAL, and WDLS…MQPS.

The protein belongs to the UPF0060 family.

It localises to the cell inner membrane. The sequence is that of UPF0060 membrane protein Pnap_4944 from Polaromonas naphthalenivorans (strain CJ2).